A 582-amino-acid polypeptide reads, in one-letter code: PX domain-containing protein kinase-like protein (582 aa).

Residues 14-126 (LDDTVPLTAA…KFLDPNNYSA (113 aa)) form the PX domain. The 394-residue stretch at 88–481 (FIAERQRGLQ…VENSEEQPVK (394 aa)) folds into the Protein kinase domain. A disordered region spans residues 433 to 550 (EQKQIHQHRR…APFLPQPVNG (118 aa)). 2 stretches are compositionally biased toward basic residues: residues 437–448 (IHQHRRLTRAQS) and 457–469 (KRRK…KSKR). Low complexity predominate over residues 483-514 (SNSNNSAGSGASSPLTSPSSPTPPSTAGLSSA). The segment covering 515 to 531 (LPPPPPPPPPPPPPAGP) has biased composition (pro residues). Residues 548–567 (VNGVNRGALLSSIQNFQKGT) enclose the WH2 domain.

This sequence belongs to the protein kinase superfamily. In terms of tissue distribution, isoform 1 is present in all tissues examined. Isoform 2 is found in all tissues except skeletal muscle and very low levels in spleen. Both isoforms are widely expressed throughout the nervous system however levels of isoform 2 are higher in purified hippocampal and cortical neurons whereas glial cells express more isoform 1 than isoform 2.

It localises to the cytoplasm. It is found in the cell membrane. In terms of biological role, binds to and modulates brain Na,K-ATPase subunits ATP1B1 and ATP1B3 and may thereby participate in the regulation of electrical excitability and synaptic transmission. May not display kinase activity. The sequence is that of PX domain-containing protein kinase-like protein from Mus musculus (Mouse).